The primary structure comprises 404 residues: Probable pectate lyase 18 (404 aa).

The N-terminal stretch at 1 to 20 (MSTLFFTFSLLLLAPLLVIS) is a signal peptide. N-linked (GlcNAc...) asparagine glycosylation occurs at N37. C159 and C178 are joined by a disulfide. Residue N191 is glycosylated (N-linked (GlcNAc...) asparagine). Ca(2+) is bound by residues D200, D202, D224, and D228. The active site involves R280.

The protein belongs to the polysaccharide lyase 1 family. The cofactor is Ca(2+). In terms of tissue distribution, predominantly found in the pistil where it is found in the outer five layers of the strands of transmitting tissue within the upper two-thirds of the style. Found at much lower levels in the anthers and vegetative organs.

The protein resides in the secreted. The enzyme catalyses Eliminative cleavage of (1-&gt;4)-alpha-D-galacturonan to give oligosaccharides with 4-deoxy-alpha-D-galact-4-enuronosyl groups at their non-reducing ends.. Its pathway is glycan metabolism; pectin degradation; 2-dehydro-3-deoxy-D-gluconate from pectin: step 2/5. In terms of biological role, may have a role in the development of the transmitting tissue of the style and/or in the events related to pollination such as some aspect in the facilitation of compatible pollen tube growth. In Solanum lycopersicum (Tomato), this protein is Probable pectate lyase 18.